The sequence spans 84 residues: Large ribosomal subunit protein bL27c (84 aa).

Residues 1-23 (MAHKKGAGSTKNGRDSNAKRLGV) are disordered.

This sequence belongs to the bacterial ribosomal protein bL27 family.

It is found in the plastid. It localises to the chloroplast. The protein is Large ribosomal subunit protein bL27c of Thalassiosira pseudonana (Marine diatom).